A 482-amino-acid chain; its full sequence is Phenylalanine--tRNA ligase alpha subunit (482 aa).

L-phenylalanine contacts are provided by residues Thr-327, Gln-366 to Glu-368, and Tyr-406. Glu-408 serves as a coordination point for Mg(2+). L-phenylalanine is bound at residue Phe-430.

The protein belongs to the class-II aminoacyl-tRNA synthetase family. Phe-tRNA synthetase alpha subunit type 2 subfamily. As to quaternary structure, tetramer of two alpha and two beta subunits. The cofactor is Mg(2+).

It is found in the cytoplasm. It carries out the reaction tRNA(Phe) + L-phenylalanine + ATP = L-phenylalanyl-tRNA(Phe) + AMP + diphosphate + H(+). The polypeptide is Phenylalanine--tRNA ligase alpha subunit (Thermoplasma volcanium (strain ATCC 51530 / DSM 4299 / JCM 9571 / NBRC 15438 / GSS1)).